The primary structure comprises 165 residues: Thiol peroxidase (165 aa).

Residues 18–164 enclose the Thioredoxin domain; it reads RKVGDKAPNF…YEAAIEAAKK (147 aa). Cys-60 functions as the Cysteine sulfenic acid (-SOH) intermediate in the catalytic mechanism. A disulfide bridge connects residues Cys-60 and Cys-94.

The protein belongs to the peroxiredoxin family. Tpx subfamily. In terms of assembly, homodimer.

It catalyses the reaction a hydroperoxide + [thioredoxin]-dithiol = an alcohol + [thioredoxin]-disulfide + H2O. Functionally, thiol-specific peroxidase that catalyzes the reduction of hydrogen peroxide and organic hydroperoxides to water and alcohols, respectively. Plays a role in cell protection against oxidative stress by detoxifying peroxides. The protein is Thiol peroxidase of Listeria monocytogenes serotype 4b (strain F2365).